The sequence spans 324 residues: Annexin A10 (324 aa).

Annexin repeat units follow at residues 17 to 88 (FNPM…GLMY), 89 to 160 (PPPS…NLVQ), 171 to 243 (AMAA…AIVR), and 247 to 318 (DKPS…AICA).

The protein belongs to the annexin family.

This Mus musculus (Mouse) protein is Annexin A10 (Anxa10).